Here is a 298-residue protein sequence, read N- to C-terminus: tRNA pseudouridine synthase A (298 aa).

Asp56 (nucleophile) is an active-site residue. Tyr125 contributes to the substrate binding site.

Belongs to the tRNA pseudouridine synthase TruA family. Homodimer.

It carries out the reaction uridine(38/39/40) in tRNA = pseudouridine(38/39/40) in tRNA. Its function is as follows. Formation of pseudouridine at positions 38, 39 and 40 in the anticodon stem and loop of transfer RNAs. This is tRNA pseudouridine synthase A from Bifidobacterium animalis subsp. lactis (strain AD011).